The following is a 471-amino-acid chain: Ribulose bisphosphate carboxylase large chain 2 (471 aa).

2 residues coordinate substrate: asparagine 116 and threonine 166. The Proton acceptor role is filled by lysine 168. Lysine 170 is a binding site for substrate. Mg(2+) is bound by residues lysine 194, aspartate 196, and glutamate 197. Position 194 is an N6-carboxylysine (lysine 194). Histidine 287 acts as the Proton acceptor in catalysis. Substrate contacts are provided by arginine 288, histidine 320, and serine 372.

Belongs to the RuBisCO large chain family. Type I subfamily. In terms of assembly, heterohexadecamer of 8 large chains and 8 small chains. Forms a CsoS2-CsoS1-RuBisCO complex. Requires Mg(2+) as cofactor.

Its subcellular location is the carboxysome. The enzyme catalyses 2 (2R)-3-phosphoglycerate + 2 H(+) = D-ribulose 1,5-bisphosphate + CO2 + H2O. The catalysed reaction is D-ribulose 1,5-bisphosphate + O2 = 2-phosphoglycolate + (2R)-3-phosphoglycerate + 2 H(+). In terms of biological role, ruBisCO catalyzes two reactions: the carboxylation of D-ribulose 1,5-bisphosphate, the primary event in carbon dioxide fixation, as well as the oxidative fragmentation of the pentose substrate. Both reactions occur simultaneously and in competition at the same active site. Replacing the endogenous type I ccbLS genes in H.neapolitanus with this carboxysomally targeted enzyme reconstitutes RuBisCO with about 25% of normal activity; the active enzyme is targeted to carboxysomes. In Hydrogenovibrio crunogenus (strain DSM 25203 / XCL-2) (Thiomicrospira crunogena), this protein is Ribulose bisphosphate carboxylase large chain 2.